Consider the following 163-residue polypeptide: NADH-quinone oxidoreductase subunit I (163 aa).

4Fe-4S ferredoxin-type domains follow at residues 53-83 (LRRY…IEAG) and 94-123 (VRYD…EGPN). [4Fe-4S] cluster contacts are provided by Cys-63, Cys-66, Cys-69, Cys-73, Cys-103, Cys-106, Cys-109, and Cys-113.

It belongs to the complex I 23 kDa subunit family. NDH-1 is composed of 14 different subunits. Subunits NuoA, H, J, K, L, M, N constitute the membrane sector of the complex. The cofactor is [4Fe-4S] cluster.

Its subcellular location is the cell inner membrane. It carries out the reaction a quinone + NADH + 5 H(+)(in) = a quinol + NAD(+) + 4 H(+)(out). In terms of biological role, NDH-1 shuttles electrons from NADH, via FMN and iron-sulfur (Fe-S) centers, to quinones in the respiratory chain. The immediate electron acceptor for the enzyme in this species is believed to be ubiquinone. Couples the redox reaction to proton translocation (for every two electrons transferred, four hydrogen ions are translocated across the cytoplasmic membrane), and thus conserves the redox energy in a proton gradient. This chain is NADH-quinone oxidoreductase subunit I, found in Brucella suis (strain ATCC 23445 / NCTC 10510).